Reading from the N-terminus, the 144-residue chain is Large ribosomal subunit protein uL16 (144 aa).

Belongs to the universal ribosomal protein uL16 family. In terms of assembly, part of the 50S ribosomal subunit.

In terms of biological role, binds 23S rRNA and is also seen to make contacts with the A and possibly P site tRNAs. This chain is Large ribosomal subunit protein uL16, found in Bacillus subtilis (strain 168).